Consider the following 831-residue polypeptide: Periplasmic nitrate reductase (831 aa).

A signal peptide (tat-type signal) is located at residues Met1 to Ala35. The region spanning Ile42–Asp98 is the 4Fe-4S Mo/W bis-MGD-type domain. [4Fe-4S] cluster is bound by residues Cys49, Cys52, Cys56, and Cys84. Mo-bis(molybdopterin guanine dinucleotide) is bound by residues Lys86, Gln153, Asn178, Cys182, Trp215–Met222, Ser246–His250, Gln265–Asp267, Met375, Gln379, Asn485, Ser511–Asp512, Lys534, Asp561, and Thr721–Ser730. Trp797 provides a ligand contact to substrate. Positions 805 and 822 each coordinate Mo-bis(molybdopterin guanine dinucleotide).

It belongs to the prokaryotic molybdopterin-containing oxidoreductase family. NasA/NapA/NarB subfamily. As to quaternary structure, component of the periplasmic nitrate reductase NapAB complex composed of NapA and NapB. Requires [4Fe-4S] cluster as cofactor. Mo-bis(molybdopterin guanine dinucleotide) serves as cofactor. Post-translationally, predicted to be exported by the Tat system. The position of the signal peptide cleavage has not been experimentally proven.

It is found in the periplasm. The enzyme catalyses 2 Fe(II)-[cytochrome] + nitrate + 2 H(+) = 2 Fe(III)-[cytochrome] + nitrite + H2O. Catalytic subunit of the periplasmic nitrate reductase complex NapAB. Receives electrons from NapB and catalyzes the reduction of nitrate to nitrite. In Dinoroseobacter shibae (strain DSM 16493 / NCIMB 14021 / DFL 12), this protein is Periplasmic nitrate reductase.